A 197-amino-acid chain; its full sequence is Protein GrpE (197 aa).

Positions 1 to 27 are enriched in basic and acidic residues; sequence MSNKEQHIEKEEQLQEEKHEEQQKTEE. Residues 1–34 form a disordered region; the sequence is MSNKEQHIEKEEQLQEEKHEEQQKTEETEVEAVN.

It belongs to the GrpE family. Homodimer.

It localises to the cytoplasm. Functionally, participates actively in the response to hyperosmotic and heat shock by preventing the aggregation of stress-denatured proteins, in association with DnaK and GrpE. It is the nucleotide exchange factor for DnaK and may function as a thermosensor. Unfolded proteins bind initially to DnaJ; upon interaction with the DnaJ-bound protein, DnaK hydrolyzes its bound ATP, resulting in the formation of a stable complex. GrpE releases ADP from DnaK; ATP binding to DnaK triggers the release of the substrate protein, thus completing the reaction cycle. Several rounds of ATP-dependent interactions between DnaJ, DnaK and GrpE are required for fully efficient folding. The sequence is that of Protein GrpE from Pasteurella multocida (strain Pm70).